Here is a 446-residue protein sequence, read N- to C-terminus: tRNA-2-methylthio-N(6)-dimethylallyladenosine synthase (446 aa).

An MTTase N-terminal domain is found at 2–122; the sequence is KKAYVKSYGC…LPDLLRQSRE (121 aa). The [4Fe-4S] cluster site is built by cysteine 11, cysteine 47, cysteine 85, cysteine 157, cysteine 161, and cysteine 164. In terms of domain architecture, Radical SAM core spans 143-375; it reads RNRGVTGFLT…QQLLDQQRHA (233 aa). Residues 378–440 enclose the TRAM domain; it reads AAAVGTVAEI…SNSLFGEVLE (63 aa).

It belongs to the methylthiotransferase family. MiaB subfamily. Monomer. The cofactor is [4Fe-4S] cluster.

It is found in the cytoplasm. The enzyme catalyses N(6)-dimethylallyladenosine(37) in tRNA + (sulfur carrier)-SH + AH2 + 2 S-adenosyl-L-methionine = 2-methylsulfanyl-N(6)-dimethylallyladenosine(37) in tRNA + (sulfur carrier)-H + 5'-deoxyadenosine + L-methionine + A + S-adenosyl-L-homocysteine + 2 H(+). In terms of biological role, catalyzes the methylthiolation of N6-(dimethylallyl)adenosine (i(6)A), leading to the formation of 2-methylthio-N6-(dimethylallyl)adenosine (ms(2)i(6)A) at position 37 in tRNAs that read codons beginning with uridine. This Methylorubrum populi (strain ATCC BAA-705 / NCIMB 13946 / BJ001) (Methylobacterium populi) protein is tRNA-2-methylthio-N(6)-dimethylallyladenosine synthase.